We begin with the raw amino-acid sequence, 152 residues long: Transcriptional repressor NrdR (152 aa).

Residues 3–34 (CPYCNASDTKVIDSRLAAEGAQVRRRRSCNSC) fold into a zinc finger. One can recognise an ATP-cone domain in the interval 49 to 139 (PRIIKSSGKI…VYRDFQDIDA (91 aa)).

Belongs to the NrdR family. Requires Zn(2+) as cofactor.

Its function is as follows. Negatively regulates transcription of bacterial ribonucleotide reductase nrd genes and operons by binding to NrdR-boxes. This Psychrobacter arcticus (strain DSM 17307 / VKM B-2377 / 273-4) protein is Transcriptional repressor NrdR.